Reading from the N-terminus, the 443-residue chain is Glycerol-3-phosphate acyltransferase 3-like (443 aa).

Transmembrane regions (helical) follow at residues 15–35 (WFSCVIVLIMLPAMFGISLGI), 146–166 (ISLRLTVLWVVGVVVRYCILL), and 170–190 (ITLTTIGLTWLVIGTTTVGFL). An HXXXXD motif motif is present at residues 238-243 (HTSPID). Residues 358 to 378 (IMSYLLRMMTSWAIVCNVWYL) form a helical membrane-spanning segment.

This sequence belongs to the 1-acyl-sn-glycerol-3-phosphate acyltransferase family.

It localises to the endoplasmic reticulum membrane. It carries out the reaction sn-glycerol 3-phosphate + an acyl-CoA = a 1-acyl-sn-glycero-3-phosphate + CoA. It catalyses the reaction a 1-acyl-sn-glycero-3-phosphate + an acyl-CoA = a 1,2-diacyl-sn-glycero-3-phosphate + CoA. Its pathway is glycerolipid metabolism; triacylglycerol biosynthesis. It participates in phospholipid metabolism; CDP-diacylglycerol biosynthesis; CDP-diacylglycerol from sn-glycerol 3-phosphate: step 1/3. Its function is as follows. May transfer the acyl-group from acyl-coA to the sn-1 position of glycerol-3-phosphate, an essential step in glycerolipid biosynthesis. Also transfers the acyl-group from acyl-coA to the sn-2 position of 1-acyl-sn-glycerol-3-phosphate (lysophosphatidic acid, or LPA), forming 1,2-diacyl-sn-glycerol-3-phosphate (phosphatidic acid, or PA). This chain is Glycerol-3-phosphate acyltransferase 3-like (agpat9l), found in Danio rerio (Zebrafish).